Here is a 277-residue protein sequence, read N- to C-terminus: NADPH-dependent 7-cyano-7-deazaguanine reductase (277 aa).

Position 83–85 (83–85 (VES)) interacts with substrate. Position 85-86 (85-86 (SK)) interacts with NADPH. Cys184 serves as the catalytic Thioimide intermediate. Asp191 acts as the Proton donor in catalysis. 223–224 (HE) is a binding site for substrate. 252–253 (RG) provides a ligand contact to NADPH.

It belongs to the GTP cyclohydrolase I family. QueF type 2 subfamily. In terms of assembly, homodimer.

Its subcellular location is the cytoplasm. The enzyme catalyses 7-aminomethyl-7-carbaguanine + 2 NADP(+) = 7-cyano-7-deazaguanine + 2 NADPH + 3 H(+). It functions in the pathway tRNA modification; tRNA-queuosine biosynthesis. Its function is as follows. Catalyzes the NADPH-dependent reduction of 7-cyano-7-deazaguanine (preQ0) to 7-aminomethyl-7-deazaguanine (preQ1). This is NADPH-dependent 7-cyano-7-deazaguanine reductase from Cupriavidus taiwanensis (strain DSM 17343 / BCRC 17206 / CCUG 44338 / CIP 107171 / LMG 19424 / R1) (Ralstonia taiwanensis (strain LMG 19424)).